A 175-amino-acid polypeptide reads, in one-letter code: Peptide deformylase (175 aa).

The Fe cation site is built by Cys92 and His134. The active site involves Glu135. His138 is a binding site for Fe cation.

Belongs to the polypeptide deformylase family. Fe(2+) is required as a cofactor.

The enzyme catalyses N-terminal N-formyl-L-methionyl-[peptide] + H2O = N-terminal L-methionyl-[peptide] + formate. In terms of biological role, removes the formyl group from the N-terminal Met of newly synthesized proteins. Requires at least a dipeptide for an efficient rate of reaction. N-terminal L-methionine is a prerequisite for activity but the enzyme has broad specificity at other positions. In Blochmanniella floridana, this protein is Peptide deformylase.